A 251-amino-acid chain; its full sequence is Ubiquinone/menaquinone biosynthesis C-methyltransferase UbiE (251 aa).

Residues Thr74, Asp95, 123–124, and Ser140 each bind S-adenosyl-L-methionine; that span reads NA.

Belongs to the class I-like SAM-binding methyltransferase superfamily. MenG/UbiE family.

The catalysed reaction is a 2-demethylmenaquinol + S-adenosyl-L-methionine = a menaquinol + S-adenosyl-L-homocysteine + H(+). The enzyme catalyses a 2-methoxy-6-(all-trans-polyprenyl)benzene-1,4-diol + S-adenosyl-L-methionine = a 5-methoxy-2-methyl-3-(all-trans-polyprenyl)benzene-1,4-diol + S-adenosyl-L-homocysteine + H(+). Its pathway is quinol/quinone metabolism; menaquinone biosynthesis; menaquinol from 1,4-dihydroxy-2-naphthoate: step 2/2. It participates in cofactor biosynthesis; ubiquinone biosynthesis. Methyltransferase required for the conversion of demethylmenaquinol (DMKH2) to menaquinol (MKH2) and the conversion of 2-polyprenyl-6-methoxy-1,4-benzoquinol (DDMQH2) to 2-polyprenyl-3-methyl-6-methoxy-1,4-benzoquinol (DMQH2). The polypeptide is Ubiquinone/menaquinone biosynthesis C-methyltransferase UbiE (Pectobacterium carotovorum subsp. carotovorum (strain PC1)).